The following is a 224-amino-acid chain: UPF0758 protein CJA_3522 (224 aa).

An MPN domain is found at 102 to 224 (LLSSPHLVRD…LVSLAERGWL (123 aa)). Zn(2+) is bound by residues H173, H175, and D186. The short motif at 173–186 (HNHPSGLAEPSQAD) is the JAMM motif element.

Belongs to the UPF0758 family.

This is UPF0758 protein CJA_3522 from Cellvibrio japonicus (strain Ueda107) (Pseudomonas fluorescens subsp. cellulosa).